Here is a 163-residue protein sequence, read N- to C-terminus: Phosphopantetheine adenylyltransferase (163 aa).

Thr9 lines the substrate pocket. ATP-binding positions include 9–10 and His17; that span reads TF. 3 residues coordinate substrate: Lys41, Leu76, and Arg90. ATP contacts are provided by residues 91–93, Glu101, and 126–132; these read GLR and HQAIASR.

Belongs to the bacterial CoaD family. As to quaternary structure, homohexamer. The cofactor is Mg(2+).

It is found in the cytoplasm. The catalysed reaction is (R)-4'-phosphopantetheine + ATP + H(+) = 3'-dephospho-CoA + diphosphate. It participates in cofactor biosynthesis; coenzyme A biosynthesis; CoA from (R)-pantothenate: step 4/5. Its function is as follows. Reversibly transfers an adenylyl group from ATP to 4'-phosphopantetheine, yielding dephospho-CoA (dPCoA) and pyrophosphate. In Caulobacter vibrioides (strain ATCC 19089 / CIP 103742 / CB 15) (Caulobacter crescentus), this protein is Phosphopantetheine adenylyltransferase.